The chain runs to 96 residues: ATP synthase subunit c (96 aa).

The next 2 membrane-spanning stretches (helical) occupy residues 9–29 (FIAC…GCGI) and 58–78 (IGLA…LILI).

This sequence belongs to the ATPase C chain family. F-type ATPases have 2 components, F(1) - the catalytic core - and F(0) - the membrane proton channel. F(1) has five subunits: alpha(3), beta(3), gamma(1), delta(1), epsilon(1). F(0) has three main subunits: a(1), b(2) and c(10-14). The alpha and beta chains form an alternating ring which encloses part of the gamma chain. F(1) is attached to F(0) by a central stalk formed by the gamma and epsilon chains, while a peripheral stalk is formed by the delta and b chains.

Its subcellular location is the cell inner membrane. Its function is as follows. F(1)F(0) ATP synthase produces ATP from ADP in the presence of a proton or sodium gradient. F-type ATPases consist of two structural domains, F(1) containing the extramembraneous catalytic core and F(0) containing the membrane proton channel, linked together by a central stalk and a peripheral stalk. During catalysis, ATP synthesis in the catalytic domain of F(1) is coupled via a rotary mechanism of the central stalk subunits to proton translocation. In terms of biological role, key component of the F(0) channel; it plays a direct role in translocation across the membrane. A homomeric c-ring of between 10-14 subunits forms the central stalk rotor element with the F(1) delta and epsilon subunits. This chain is ATP synthase subunit c, found in Desulfosudis oleivorans (strain DSM 6200 / JCM 39069 / Hxd3) (Desulfococcus oleovorans).